We begin with the raw amino-acid sequence, 264 residues long: Thymidylate synthase (264 aa).

Arginine 21 contacts dUMP. Position 51 (histidine 51) interacts with (6R)-5,10-methylene-5,6,7,8-tetrahydrofolate. Residue 126–127 participates in dUMP binding; it reads RR. The active-site Nucleophile is cysteine 146. Residues 166–169, asparagine 177, and 207–209 each bind dUMP; these read RSAD and HLY. Aspartate 169 is a (6R)-5,10-methylene-5,6,7,8-tetrahydrofolate binding site. Serine 263 is a binding site for (6R)-5,10-methylene-5,6,7,8-tetrahydrofolate.

This sequence belongs to the thymidylate synthase family. Bacterial-type ThyA subfamily. In terms of assembly, homodimer.

It is found in the cytoplasm. It catalyses the reaction dUMP + (6R)-5,10-methylene-5,6,7,8-tetrahydrofolate = 7,8-dihydrofolate + dTMP. It participates in pyrimidine metabolism; dTTP biosynthesis. Catalyzes the reductive methylation of 2'-deoxyuridine-5'-monophosphate (dUMP) to 2'-deoxythymidine-5'-monophosphate (dTMP) while utilizing 5,10-methylenetetrahydrofolate (mTHF) as the methyl donor and reductant in the reaction, yielding dihydrofolate (DHF) as a by-product. This enzymatic reaction provides an intracellular de novo source of dTMP, an essential precursor for DNA biosynthesis. This Neisseria meningitidis serogroup C / serotype 2a (strain ATCC 700532 / DSM 15464 / FAM18) protein is Thymidylate synthase.